The sequence spans 329 residues: Ketol-acid reductoisomerase (NADP(+)) (329 aa).

Residues 1 to 181 (MKVYYENDAD…GATRSGVLQT (181 aa)) form the KARI N-terminal Rossmann domain. Residues 24–27 (YGSQ), R47, and 82–85 (DQVQ) contribute to the NADP(+) site. H107 is an active-site residue. Residue G133 coordinates NADP(+). The KARI C-terminal knotted domain occupies 182–327 (TFREETETDL…GELRKMMSWL (146 aa)). 4 residues coordinate Mg(2+): D190, E194, E226, and E230. S251 serves as a coordination point for substrate.

It belongs to the ketol-acid reductoisomerase family. Requires Mg(2+) as cofactor.

It catalyses the reaction (2R)-2,3-dihydroxy-3-methylbutanoate + NADP(+) = (2S)-2-acetolactate + NADPH + H(+). The enzyme catalyses (2R,3R)-2,3-dihydroxy-3-methylpentanoate + NADP(+) = (S)-2-ethyl-2-hydroxy-3-oxobutanoate + NADPH + H(+). It functions in the pathway amino-acid biosynthesis; L-isoleucine biosynthesis; L-isoleucine from 2-oxobutanoate: step 2/4. It participates in amino-acid biosynthesis; L-valine biosynthesis; L-valine from pyruvate: step 2/4. Involved in the biosynthesis of branched-chain amino acids (BCAA). Catalyzes an alkyl-migration followed by a ketol-acid reduction of (S)-2-acetolactate (S2AL) to yield (R)-2,3-dihydroxy-isovalerate. In the isomerase reaction, S2AL is rearranged via a Mg-dependent methyl migration to produce 3-hydroxy-3-methyl-2-ketobutyrate (HMKB). In the reductase reaction, this 2-ketoacid undergoes a metal-dependent reduction by NADPH to yield (R)-2,3-dihydroxy-isovalerate. The protein is Ketol-acid reductoisomerase (NADP(+)) of Maridesulfovibrio salexigens (strain ATCC 14822 / DSM 2638 / NCIMB 8403 / VKM B-1763) (Desulfovibrio salexigens).